The primary structure comprises 332 residues: Ribosomal RNA small subunit methyltransferase H (332 aa).

Residues 39 to 41, aspartate 56, phenylalanine 83, aspartate 100, and glutamine 107 each bind S-adenosyl-L-methionine; that span reads GGY.

The protein belongs to the methyltransferase superfamily. RsmH family.

The protein localises to the cytoplasm. The catalysed reaction is cytidine(1402) in 16S rRNA + S-adenosyl-L-methionine = N(4)-methylcytidine(1402) in 16S rRNA + S-adenosyl-L-homocysteine + H(+). In terms of biological role, specifically methylates the N4 position of cytidine in position 1402 (C1402) of 16S rRNA. The polypeptide is Ribosomal RNA small subunit methyltransferase H (Bartonella quintana (strain Toulouse) (Rochalimaea quintana)).